The chain runs to 171 residues: Probable chemoreceptor glutamine deamidase CheD 1 (171 aa).

Positions 1-18 (MTRTTGAAPDRAAPAAGE) are enriched in low complexity. Positions 1–23 (MTRTTGAAPDRAAPAAGETPGGG) are disordered.

Belongs to the CheD family.

The enzyme catalyses L-glutaminyl-[protein] + H2O = L-glutamyl-[protein] + NH4(+). Its function is as follows. Probably deamidates glutamine residues to glutamate on methyl-accepting chemotaxis receptors (MCPs), playing an important role in chemotaxis. This chain is Probable chemoreceptor glutamine deamidase CheD 1, found in Anaeromyxobacter dehalogenans (strain 2CP-C).